The sequence spans 400 residues: U-box domain-containing protein 37 (400 aa).

A coiled-coil region spans residues 229 to 298; sequence KEWESAYLEE…RKAKEERDLL (70 aa). Residues 324 to 398 form the U-box domain; it reads EAPQYFICPI…QEWLHASSSF (75 aa).

The enzyme catalyses S-ubiquitinyl-[E2 ubiquitin-conjugating enzyme]-L-cysteine + [acceptor protein]-L-lysine = [E2 ubiquitin-conjugating enzyme]-L-cysteine + N(6)-ubiquitinyl-[acceptor protein]-L-lysine.. It participates in protein modification; protein ubiquitination. Its function is as follows. Functions as an E3 ubiquitin ligase. This chain is U-box domain-containing protein 37 (PUB37), found in Arabidopsis thaliana (Mouse-ear cress).